Here is a 158-residue protein sequence, read N- to C-terminus: Transcription elongation factor GreA (158 aa).

This sequence belongs to the GreA/GreB family.

Its function is as follows. Necessary for efficient RNA polymerase transcription elongation past template-encoded arresting sites. The arresting sites in DNA have the property of trapping a certain fraction of elongating RNA polymerases that pass through, resulting in locked ternary complexes. Cleavage of the nascent transcript by cleavage factors such as GreA or GreB allows the resumption of elongation from the new 3'terminus. GreA releases sequences of 2 to 3 nucleotides. This Pseudomonas syringae pv. tomato (strain ATCC BAA-871 / DC3000) protein is Transcription elongation factor GreA.